Here is a 357-residue protein sequence, read N- to C-terminus: tRNA N6-adenosine threonylcarbamoyltransferase (357 aa).

Residues His115 and His119 each coordinate Fe cation. Substrate contacts are provided by residues 137–141 (LASGG), Asp170, Gly183, and Asn281. Asp309 is a binding site for Fe cation.

The protein belongs to the KAE1 / TsaD family. Fe(2+) serves as cofactor.

The protein localises to the cytoplasm. The catalysed reaction is L-threonylcarbamoyladenylate + adenosine(37) in tRNA = N(6)-L-threonylcarbamoyladenosine(37) in tRNA + AMP + H(+). Functionally, required for the formation of a threonylcarbamoyl group on adenosine at position 37 (t(6)A37) in tRNAs that read codons beginning with adenine. Is involved in the transfer of the threonylcarbamoyl moiety of threonylcarbamoyl-AMP (TC-AMP) to the N6 group of A37, together with TsaE and TsaB. TsaD likely plays a direct catalytic role in this reaction. The chain is tRNA N6-adenosine threonylcarbamoyltransferase from Bradyrhizobium diazoefficiens (strain JCM 10833 / BCRC 13528 / IAM 13628 / NBRC 14792 / USDA 110).